The chain runs to 139 residues: Acidic phospholipase A2 DE-I (139 aa).

Positions Met1–Gly16 are cleaved as a signal peptide. 7 disulfide bridges follow: Cys42/Cys132, Cys44/Cys60, Cys59/Cys111, Cys65/Cys139, Cys66/Cys104, Cys73/Cys97, and Cys91/Cys102. Residues Tyr43, Gly45, and Gly47 each coordinate Ca(2+). Residue His63 is part of the active site. Asp64 provides a ligand contact to Ca(2+). Residue Asp105 is part of the active site.

The cofactor is Ca(2+). As to expression, expressed by the venom gland.

The protein resides in the secreted. The enzyme catalyses a 1,2-diacyl-sn-glycero-3-phosphocholine + H2O = a 1-acyl-sn-glycero-3-phosphocholine + a fatty acid + H(+). In terms of biological role, snake venom phospholipase A2 (PLA2) that inhibits the ADP- and collagen-induced human platelet aggregation. Exhibits high hydrolytic activities and preferred the anionic micelles to the zwitterionic micelles. PLA2 catalyzes the calcium-dependent hydrolysis of the 2-acyl groups in 3-sn-phosphoglycerides. The sequence is that of Acidic phospholipase A2 DE-I from Ovophis okinavensis (Ryukyu Island pit viper).